We begin with the raw amino-acid sequence, 467 residues long: Cysteine--tRNA ligase (467 aa).

Cys29 lines the Zn(2+) pocket. The 'HIGH' region signature appears at 31–41 (PTVYNYIHIGN). Residues Cys209, His234, and Glu238 each contribute to the Zn(2+) site. Residues 266–270 (KMSKS) carry the 'KMSKS' region motif. An ATP-binding site is contributed by Lys269. At Ser270 the chain carries Phosphoserine.

Belongs to the class-I aminoacyl-tRNA synthetase family. As to quaternary structure, monomer. Requires Zn(2+) as cofactor.

Its subcellular location is the cytoplasm. It carries out the reaction tRNA(Cys) + L-cysteine + ATP = L-cysteinyl-tRNA(Cys) + AMP + diphosphate. This is Cysteine--tRNA ligase from Bacillus licheniformis (strain ATCC 14580 / DSM 13 / JCM 2505 / CCUG 7422 / NBRC 12200 / NCIMB 9375 / NCTC 10341 / NRRL NRS-1264 / Gibson 46).